Here is a 193-residue protein sequence, read N- to C-terminus: Ion-translocating oxidoreductase complex subunit A (193 aa).

Transmembrane regions (helical) follow at residues 5 to 25 (LLLFVGTVLVNNFVLVKFLGL), 39 to 59 (IGMGFATTFVMTIASISSWLM), 62 to 82 (FILVPLDLLYLRTLSFILVIA), 102 to 122 (LLGIFLPLITTNCAVLGVALL), 134 to 154 (AVYGFGAAVGFSLVMVLFAAI), and 171 to 191 (SIGLITAGLMSLAFMGFSGLV).

It belongs to the NqrDE/RnfAE family. The complex is composed of six subunits: RnfA, RnfB, RnfC, RnfD, RnfE and RnfG.

The protein localises to the cell inner membrane. Its function is as follows. Part of a membrane-bound complex that couples electron transfer with translocation of ions across the membrane. The polypeptide is Ion-translocating oxidoreductase complex subunit A (Proteus mirabilis (strain HI4320)).